Reading from the N-terminus, the 123-residue chain is Ribosome-binding factor A (123 aa).

The protein belongs to the RbfA family. Monomer. Binds 30S ribosomal subunits, but not 50S ribosomal subunits or 70S ribosomes.

It localises to the cytoplasm. In terms of biological role, one of several proteins that assist in the late maturation steps of the functional core of the 30S ribosomal subunit. Associates with free 30S ribosomal subunits (but not with 30S subunits that are part of 70S ribosomes or polysomes). Required for efficient processing of 16S rRNA. May interact with the 5'-terminal helix region of 16S rRNA. In Solibacter usitatus (strain Ellin6076), this protein is Ribosome-binding factor A.